We begin with the raw amino-acid sequence, 264 residues long: Hydroxyethylthiazole kinase (264 aa).

Met-43 provides a ligand contact to substrate. ATP-binding residues include Arg-119 and Thr-165. Gly-192 lines the substrate pocket.

This sequence belongs to the Thz kinase family. The cofactor is Mg(2+).

The catalysed reaction is 5-(2-hydroxyethyl)-4-methylthiazole + ATP = 4-methyl-5-(2-phosphooxyethyl)-thiazole + ADP + H(+). It functions in the pathway cofactor biosynthesis; thiamine diphosphate biosynthesis; 4-methyl-5-(2-phosphoethyl)-thiazole from 5-(2-hydroxyethyl)-4-methylthiazole: step 1/1. In terms of biological role, catalyzes the phosphorylation of the hydroxyl group of 4-methyl-5-beta-hydroxyethylthiazole (THZ). The chain is Hydroxyethylthiazole kinase from Anoxybacillus flavithermus (strain DSM 21510 / WK1).